Here is a 428-residue protein sequence, read N- to C-terminus: tRNA(Ile)-lysidine synthase (428 aa).

Residue 25-30 (SGGIDS) coordinates ATP.

It belongs to the tRNA(Ile)-lysidine synthase family.

It localises to the cytoplasm. It catalyses the reaction cytidine(34) in tRNA(Ile2) + L-lysine + ATP = lysidine(34) in tRNA(Ile2) + AMP + diphosphate + H(+). Its function is as follows. Ligates lysine onto the cytidine present at position 34 of the AUA codon-specific tRNA(Ile) that contains the anticodon CAU, in an ATP-dependent manner. Cytidine is converted to lysidine, thus changing the amino acid specificity of the tRNA from methionine to isoleucine. This Haemophilus ducreyi (strain 35000HP / ATCC 700724) protein is tRNA(Ile)-lysidine synthase.